Here is a 738-residue protein sequence, read N- to C-terminus: Protein Aster-B (738 aa).

The disordered stretch occupies residues 1–81 (MKGFKLSCTA…SGGKNSKKSQ (81 aa)). Residues 8-19 (CTASNSNRSTPA) are compositionally biased toward polar residues. 2 positions are modified to phosphoserine: Ser-28 and Ser-30. Positions 41–51 (MVEKGSDHSSD) are enriched in basic and acidic residues. A compositionally biased stretch (low complexity) spans 59–70 (QGVQRSCSSQSG). Residues 96–163 (EDFRKLFKQL…KDICSMTKEK (68 aa)) enclose the GRAM domain. The disordered stretch occupies residues 254–299 (EENEVNDSSSKSSIETKPDASPQLPKKSITNSTLTSTGSSEAPVSF). The segment covering 259–268 (NDSSSKSSIE) has biased composition (polar residues). Ser-274 carries the post-translational modification Phosphoserine. The span at 281–295 (SITNSTLTSTGSSEA) shows a compositional bias: polar residues. Positions 372–543 (SGRQYVNEVF…ELTKTESTYL (172 aa)) constitute a VASt domain. Phosphotyrosine is present on Tyr-389. Residues Ser-550 and Ser-581 each carry the phosphoserine modification. Phosphothreonine is present on residues Thr-584, Thr-585, and Thr-587. The chain crosses the membrane as a helical span at residues 623–643 (LLLVISCVICFSLVLLVVLNM).

As to expression, highly expressed in the adrenal gland (at protein level) and brain. Also found in the kidney, testis and macrophages.

It is found in the endoplasmic reticulum membrane. Its subcellular location is the cell membrane. Functionally, cholesterol transporter that mediates non-vesicular transport of cholesterol from the plasma membrane (PM) to the endoplasmic reticulum (ER). Contains unique domains for binding cholesterol and the PM, thereby serving as a molecular bridge for the transfer of cholesterol from the PM to the ER. Plays a crucial role in cholesterol homeostasis in the adrenal gland and has the unique ability to localize to the PM based on the level of membrane cholesterol. In lipid-poor conditions localizes to the ER membrane and in response to excess cholesterol in the PM is recruited to the endoplasmic reticulum-plasma membrane contact sites (EPCS) which is mediated by the GRAM domain. At the EPCS, the sterol-binding VASt/ASTER domain binds to the cholesterol in the PM and facilitates its transfer from the PM to ER. The protein is Protein Aster-B (Gramd1b) of Mus musculus (Mouse).